The sequence spans 250 residues: Archaeal flagellar motor scaffold protein FlaX (250 aa).

Residues 1–9 (MAIQDLLQS) lie on the Extracellular side of the membrane. A helical membrane pass occupies residues 10-30 (SLFIILIGVGIPIAAFLEILF). Residues 31 to 250 (RVILPKTKRV…MILEGGGVNG (220 aa)) lie on the Cytoplasmic side of the membrane. A compositionally biased stretch (polar residues) spans 42–61 (TQQSPQNISQEQRFPTQQKP). The interval 42-72 (TQQSPQNISQEQRFPTQQKPANDETSKYSSD) is disordered. Positions 62–72 (ANDETSKYSSD) are enriched in basic and acidic residues.

The S.acidocaldarius archaellum assembly machinery and its filament consist of seven proteins (FlaB, FlaF, FlaG, FlaH, FlaI, FlaJ and FlaX). FlaX assembles into ring-shaped oligomers. Interacts directly with FlaH and the motor ATPase FlaI.

It is found in the archaeal flagellum. Its subcellular location is the cell membrane. With respect to regulation, the presence of the flagellar core components FlaH, FlaI and FlaJ seems to be crucial for the stability of FlaX. Its function is as follows. Component of the archaellum. FlaX, FlaH and FlaI form the core cytoplasmic motor complex of the crenarchaeal archaellum. FlaX forms a ring that may act as a membrane-bound cytoplasmic scaffold that guides the assembly of the archaellum motor complex. Is essential for archaellum assembly. The protein is Archaeal flagellar motor scaffold protein FlaX of Sulfolobus acidocaldarius (strain ATCC 33909 / DSM 639 / JCM 8929 / NBRC 15157 / NCIMB 11770).